The primary structure comprises 164 residues: FMN reductase (NADH) RutF (164 aa).

This sequence belongs to the non-flavoprotein flavin reductase family. RutF subfamily.

It carries out the reaction FMNH2 + NAD(+) = FMN + NADH + 2 H(+). Functionally, catalyzes the reduction of FMN to FMNH2 which is used to reduce pyrimidine by RutA via the Rut pathway. This Escherichia coli O127:H6 (strain E2348/69 / EPEC) protein is FMN reductase (NADH) RutF.